The sequence spans 89 residues: Albumin-1 (89 aa).

Residue Ala1 is a signal peptide. Intrachain disulfides connect Cys4–Cys21, Cys8–Cys23, and Cys16–Cys33. Positions 39–46 (LSSVAKMI) are excised as a propeptide.

Post-translationally, the C-terminal glycine may be removed from A1b.

Its function is as follows. A1b binds to basic 7S globulin (BG) and stimulates its phosphorylation activity. The protein is Albumin-1 (LEG) of Vigna radiata var. radiata (Mung bean).